A 90-amino-acid polypeptide reads, in one-letter code: Small ribosomal subunit protein bS16 (90 aa).

The protein belongs to the bacterial ribosomal protein bS16 family.

The protein is Small ribosomal subunit protein bS16 of Streptococcus pyogenes serotype M4 (strain MGAS10750).